Here is an 88-residue protein sequence, read N- to C-terminus: Small ribosomal subunit protein bS20 (88 aa).

The protein belongs to the bacterial ribosomal protein bS20 family.

Binds directly to 16S ribosomal RNA. The sequence is that of Small ribosomal subunit protein bS20 from Desulforamulus reducens (strain ATCC BAA-1160 / DSM 100696 / MI-1) (Desulfotomaculum reducens).